The sequence spans 452 residues: Pup--protein ligase (452 aa).

Residue E9 coordinates Mg(2+). R53 serves as a coordination point for ATP. Y55 is a binding site for Mg(2+). D57 serves as the catalytic Proton acceptor. E63 serves as a coordination point for Mg(2+). 2 residues coordinate ATP: T66 and W419.

This sequence belongs to the Pup ligase/Pup deamidase family. Pup-conjugating enzyme subfamily.

It carries out the reaction ATP + [prokaryotic ubiquitin-like protein]-L-glutamate + [protein]-L-lysine = ADP + phosphate + N(6)-([prokaryotic ubiquitin-like protein]-gamma-L-glutamyl)-[protein]-L-lysine.. It participates in protein degradation; proteasomal Pup-dependent pathway. Its pathway is protein modification; protein pupylation. Its function is as follows. Catalyzes the covalent attachment of the prokaryotic ubiquitin-like protein modifier Pup to the proteasomal substrate proteins, thereby targeting them for proteasomal degradation. This tagging system is termed pupylation. The ligation reaction involves the side-chain carboxylate of the C-terminal glutamate of Pup and the side-chain amino group of a substrate lysine. The sequence is that of Pup--protein ligase from Mycobacterium sp. (strain JLS).